We begin with the raw amino-acid sequence, 97 residues long: Defensin-like protein 245 (97 aa).

The signal sequence occupies residues 1-24 (MKFAAILLVTCVLFSLLPSHLSQG). Disulfide bonds link Cys39–Cys96, Cys50–Cys79, Cys58–Cys89, and Cys77–Cys91.

The protein belongs to the DEFL family. Flower buds and roots.

The protein resides in the secreted. This chain is Defensin-like protein 245 (SCRL4), found in Arabidopsis thaliana (Mouse-ear cress).